The following is a 152-amino-acid chain: Protein FYV5 (152 aa).

5 helical membrane passes run 26–46 (IISI…RICS), 56–76 (LISS…SCVL), 82–102 (VGII…VLFL), 106–126 (LIDL…TPFF), and 127–147 (FMLH…YLII).

The protein resides in the cell membrane. It is found in the secreted. Its subcellular location is the cell wall. Functionally, involved in maintaining an adequate ionic strength homeostasis of the cellular aqueous environment, necessary for normal growth rate. Required for survival upon exposure to K1 killer toxin and hence plays a role in cell wall glucan synthesis. Required for dithiothreitol (DTT) resistance. Involved in cell cycle progression. In Saccharomyces cerevisiae (strain ATCC 204508 / S288c) (Baker's yeast), this protein is Protein FYV5 (FYV5).